An 828-amino-acid polypeptide reads, in one-letter code: Periplasmic nitrate reductase (828 aa).

Residues 1–31 (MKLSRRGFMKANAVAAAAAAAGLSVPGVARA) constitute a signal peptide (tat-type signal). The 4Fe-4S Mo/W bis-MGD-type domain maps to 39–95 (IKWDKAPCRFCGTGCGVLVGTQQGRVVACQGDPDAPVNRGLNCIKGYFLPKIMYGED). Cys-46, Cys-49, Cys-53, and Cys-81 together coordinate [4Fe-4S] cluster. Mo-bis(molybdopterin guanine dinucleotide) contacts are provided by residues Lys-83, Gln-150, Asn-175, Cys-179, 212 to 219 (WGANMAEM), 243 to 247 (STYQH), 262 to 264 (QSD), Met-372, Gln-376, Asn-482, 508 to 509 (SD), Lys-531, Asp-558, and 718 to 727 (TGRVLEHWHT). Phe-794 lines the substrate pocket. Positions 802 and 819 each coordinate Mo-bis(molybdopterin guanine dinucleotide).

The protein belongs to the prokaryotic molybdopterin-containing oxidoreductase family. NasA/NapA/NarB subfamily. Component of the periplasmic nitrate reductase NapAB complex composed of NapA and NapB. Requires [4Fe-4S] cluster as cofactor. The cofactor is Mo-bis(molybdopterin guanine dinucleotide). Post-translationally, predicted to be exported by the Tat system. The position of the signal peptide cleavage has not been experimentally proven.

It is found in the periplasm. The enzyme catalyses 2 Fe(II)-[cytochrome] + nitrate + 2 H(+) = 2 Fe(III)-[cytochrome] + nitrite + H2O. Functionally, catalytic subunit of the periplasmic nitrate reductase complex NapAB. Receives electrons from NapB and catalyzes the reduction of nitrate to nitrite. This is Periplasmic nitrate reductase from Shigella dysenteriae serotype 1 (strain Sd197).